The following is a 388-amino-acid chain: NADPH-dependent butanol dehydrogenase (388 aa).

It belongs to the iron-containing alcohol dehydrogenase family.

This enzyme has activity using butanol and ethanol as substrates. In Clostridium saccharobutylicum, this protein is NADPH-dependent butanol dehydrogenase (adh1).